Here is a 167-residue protein sequence, read N- to C-terminus: Endoribonuclease YbeY (167 aa).

Zn(2+) is bound by residues histidine 132, histidine 136, and histidine 142.

Belongs to the endoribonuclease YbeY family. Requires Zn(2+) as cofactor.

It localises to the cytoplasm. Single strand-specific metallo-endoribonuclease involved in late-stage 70S ribosome quality control and in maturation of the 3' terminus of the 16S rRNA. The sequence is that of Endoribonuclease YbeY from Clostridium tetani (strain Massachusetts / E88).